The primary structure comprises 252 residues: Ribosomal RNA small subunit methyltransferase J (252 aa).

S-adenosyl-L-methionine is bound by residues 101–102 (RD), 117–118 (ER), 153–154 (SS), and aspartate 171.

This sequence belongs to the methyltransferase superfamily. RsmJ family.

It localises to the cytoplasm. The catalysed reaction is guanosine(1516) in 16S rRNA + S-adenosyl-L-methionine = N(2)-methylguanosine(1516) in 16S rRNA + S-adenosyl-L-homocysteine + H(+). Its function is as follows. Specifically methylates the guanosine in position 1516 of 16S rRNA. The sequence is that of Ribosomal RNA small subunit methyltransferase J from Salmonella choleraesuis (strain SC-B67).